The primary structure comprises 271 residues: MPELPEVETTLRGLSPHLVGQRIHGVILRRPDLRWPIPEQIERLLPGATITNVRRRAKYLLIDTDAGGSALLHLGMSGSLRVLPGDTLPRAHDHVDISLQNGRVLRFNDPRRFGCLLWQSGTQTHELLAALGPEPLSDAFTGDYLHALAQGRRAAVKTFLMDQAVVVGVGNIYAAESLHRAGISPLREAGKVSLARYRRLADAVKDILAYAIQRGGTTLRDFISPDGAPGYFEQELSVYGREGEACKQCGRVLKHATIGQRATVWCGSCQR.

Pro-2 (schiff-base intermediate with DNA) is an active-site residue. The active-site Proton donor is Glu-3. Lys-58 serves as the catalytic Proton donor; for beta-elimination activity. Residues His-92, Arg-111, and Arg-152 each contribute to the DNA site. The FPG-type zinc-finger motif lies at 237-271 (SVYGREGEACKQCGRVLKHATIGQRATVWCGSCQR). Arg-261 acts as the Proton donor; for delta-elimination activity in catalysis.

It belongs to the FPG family. Monomer. It depends on Zn(2+) as a cofactor.

The enzyme catalyses Hydrolysis of DNA containing ring-opened 7-methylguanine residues, releasing 2,6-diamino-4-hydroxy-5-(N-methyl)formamidopyrimidine.. It carries out the reaction 2'-deoxyribonucleotide-(2'-deoxyribose 5'-phosphate)-2'-deoxyribonucleotide-DNA = a 3'-end 2'-deoxyribonucleotide-(2,3-dehydro-2,3-deoxyribose 5'-phosphate)-DNA + a 5'-end 5'-phospho-2'-deoxyribonucleoside-DNA + H(+). Involved in base excision repair of DNA damaged by oxidation or by mutagenic agents. Acts as a DNA glycosylase that recognizes and removes damaged bases. Has a preference for oxidized purines, such as 7,8-dihydro-8-oxoguanine (8-oxoG). Has AP (apurinic/apyrimidinic) lyase activity and introduces nicks in the DNA strand. Cleaves the DNA backbone by beta-delta elimination to generate a single-strand break at the site of the removed base with both 3'- and 5'-phosphates. The polypeptide is Formamidopyrimidine-DNA glycosylase (Xanthomonas euvesicatoria pv. vesicatoria (strain 85-10) (Xanthomonas campestris pv. vesicatoria)).